A 459-amino-acid polypeptide reads, in one-letter code: MAKVWSKRFDNALDTFIEKFNASIFFDRKLILEDLDCSIAHAKMLGKTEVLSSTEALQIINGLESIKVDYLEGKFSPGPPSEDIHYCIEEKLISLIGETGKKLHTGRSRNDQVGTDLRLWLRKEIDNNEILITDLQKSFLNLAKSNIYTLIPGYTHMQRAQPLSLAHHLLAYIEMLQRDRERFKEVRLRVNTSPLGAAALAGTKIKIDRHFTAAELGFEKIYKNSIDAVSDRDFCIEFVSASALLMSHLSKISEEIILWVTDEFSFAKLTDKCATGSSLMPQKKNPDVPELIRGKTGRVYGHLQALLTMVKGVPLSYNKDFQEDKEPIFDTAETISSCIKAMTILINQGIEFNVKNLSDSVENDFSNATDLADYLVGKDVPFRTAYQVVGEIVKYCLERKILFKNLKINEFKKFHPKFDEDVFLDLKPFNVVKSRNSEGGTGFVQVEKEVNNWQKKLLL.

It belongs to the lyase 1 family. Argininosuccinate lyase subfamily.

The protein resides in the cytoplasm. The catalysed reaction is 2-(N(omega)-L-arginino)succinate = fumarate + L-arginine. It participates in amino-acid biosynthesis; L-arginine biosynthesis; L-arginine from L-ornithine and carbamoyl phosphate: step 3/3. The protein is Argininosuccinate lyase of Prochlorococcus marinus (strain AS9601).